The sequence spans 256 residues: Thiazole synthase (256 aa).

Lys-96 acts as the Schiff-base intermediate with DXP in catalysis. 1-deoxy-D-xylulose 5-phosphate is bound by residues Gly-157, 183–184, and 205–206; these read AG and NT.

It belongs to the ThiG family. In terms of assembly, homotetramer. Forms heterodimers with either ThiH or ThiS.

It localises to the cytoplasm. It catalyses the reaction [ThiS sulfur-carrier protein]-C-terminal-Gly-aminoethanethioate + 2-iminoacetate + 1-deoxy-D-xylulose 5-phosphate = [ThiS sulfur-carrier protein]-C-terminal Gly-Gly + 2-[(2R,5Z)-2-carboxy-4-methylthiazol-5(2H)-ylidene]ethyl phosphate + 2 H2O + H(+). The protein operates within cofactor biosynthesis; thiamine diphosphate biosynthesis. Its function is as follows. Catalyzes the rearrangement of 1-deoxy-D-xylulose 5-phosphate (DXP) to produce the thiazole phosphate moiety of thiamine. Sulfur is provided by the thiocarboxylate moiety of the carrier protein ThiS. In vitro, sulfur can be provided by H(2)S. The sequence is that of Thiazole synthase from Clostridium beijerinckii (strain ATCC 51743 / NCIMB 8052) (Clostridium acetobutylicum).